The primary structure comprises 385 residues: Homoserine O-succinyltransferase (385 aa).

An AB hydrolase-1 domain is found at Asn-46–Leu-355. The Nucleophile role is filled by Ser-151. Residue Arg-221 coordinates substrate. Active-site residues include Asp-318 and His-351. Residue Asp-352 participates in substrate binding.

Belongs to the AB hydrolase superfamily. MetX family. In terms of assembly, homodimer.

It is found in the cytoplasm. It catalyses the reaction L-homoserine + succinyl-CoA = O-succinyl-L-homoserine + CoA. It participates in amino-acid biosynthesis; L-methionine biosynthesis via de novo pathway; O-succinyl-L-homoserine from L-homoserine: step 1/1. Transfers a succinyl group from succinyl-CoA to L-homoserine, forming succinyl-L-homoserine. The sequence is that of Homoserine O-succinyltransferase from Hydrogenovibrio crunogenus (strain DSM 25203 / XCL-2) (Thiomicrospira crunogena).